Consider the following 247-residue polypeptide: Segregation and condensation protein A (247 aa).

This sequence belongs to the ScpA family. Component of a cohesin-like complex composed of ScpA, ScpB and the Smc homodimer, in which ScpA and ScpB bind to the head domain of Smc. The presence of the three proteins is required for the association of the complex with DNA.

It is found in the cytoplasm. In terms of biological role, participates in chromosomal partition during cell division. May act via the formation of a condensin-like complex containing Smc and ScpB that pull DNA away from mid-cell into both cell halves. This Bacillus cereus (strain 03BB102) protein is Segregation and condensation protein A.